A 310-amino-acid polypeptide reads, in one-letter code: Proline dehydrogenase (310 aa).

Lysine 98 is a substrate binding site. Residue aspartate 135 is part of the active site. FAD contacts are provided by residues methionine 136, glutamine 166, 187-192 (RMVKGA), 229-230 (TH), and 292-295 (RIAE). The active site involves arginine 187. 291 to 292 (RR) is a substrate binding site.

It belongs to the proline dehydrogenase family. FAD serves as cofactor.

It catalyses the reaction L-proline + a quinone = (S)-1-pyrroline-5-carboxylate + a quinol + H(+). It participates in amino-acid degradation; L-proline degradation into L-glutamate; L-glutamate from L-proline: step 1/2. Its function is as follows. Converts proline to delta-1-pyrroline-5-carboxylate. This is Proline dehydrogenase from Deinococcus radiodurans (strain ATCC 13939 / DSM 20539 / JCM 16871 / CCUG 27074 / LMG 4051 / NBRC 15346 / NCIMB 9279 / VKM B-1422 / R1).